A 309-amino-acid chain; its full sequence is GFADLMGYIPLVGAPLGGAARALAHGVRVLEDGVNYATGNLPGCSFSIFLLALLSCLTVPASAYQVRNSSGIYHVTNDCPNSSIVYETADTILHSPGCVPCVREGNASKCWVPVAPTVATRDGNLPATQLRRHIDLLVGSATLCSALYVGDLCGSVFLVGQLFTFSPRRHWTTQDCNCSIYPGHITGHRMAWDMMMNWSPTAALVMAQLLRIPQAILDMIAGAHWGVLAGIAYFSMVGNWAKVLVVLLLFAGVDATTYTTGGNAARTTQALTSFFSPGAKQDIQLINTNGSWHINRTALNCNASLDTGW.

The Cytoplasmic portion of the chain corresponds to 1–40; that stretch reads GFADLMGYIPLVGAPLGGAARALAHGVRVLEDGVNYATGN. An important for lipid droplets localization region spans residues 36-39; the sequence is YATG. The chain crosses the membrane as a helical span at residues 41–61; the sequence is LPGCSFSIFLLALLSCLTVPA. The propeptide at 50 to 63 is ER anchor for the core protein, removed in mature form by host signal peptidase; that stretch reads LLALLSCLTVPASA. Over 62 to 230 the chain is Lumenal; it reads SAYQVRNSSG…AGAHWGVLAG (169 aa). 3 N-linked (GlcNAc...) asparagine; by host glycosylation sites follow: N68, N81, and N106. The tract at residues 137–168 is important for fusion; sequence LVGSATLCSALYVGDLCGSVFLVGQLFTFSPR. The N-linked (GlcNAc...) asparagine; by host glycan is linked to N177. The chain crosses the membrane as a helical span at residues 231–251; the sequence is IAYFSMVGNWAKVLVVLLLFA. At 252-309 the chain is on the lumenal side; sequence GVDATTYTTGGNAARTTQALTSFFSPGAKQDIQLINTNGSWHINRTALNCNASLDTGW. Residues 256–282 are HVR1; that stretch reads TTYTTGGNAARTTQALTSFFSPGAKQD. N-linked (GlcNAc...) (high mannose) asparagine; by host glycosylation is found at N289, N295, and N302.

Belongs to the hepacivirus polyprotein family. Homooligomer. Interacts with E1 (via C-terminus). Interacts with the non-structural protein 5A. Interacts (via N-terminus) with host STAT1 (via SH2 domain); this interaction results in decreased STAT1 phosphorylation and ubiquitin-mediated proteasome-dependent STAT1 degradation, leading to decreased IFN-stimulated gene transcription. Interacts with host STAT3; this interaction constitutively activates STAT3. Interacts with host LTBR receptor. Interacts with host TNFRSF1A receptor and possibly induces apoptosis. Interacts with host HNRPK. Interacts with host YWHAE. Interacts with host UBE3A/E6AP. Interacts with host DDX3X. Interacts with host APOA2. Interacts with host RXRA protein. Interacts with host SP110 isoform 3/Sp110b; this interaction sequesters the transcriptional corepressor SP110 away from the nucleus. Interacts with host CREB3 nuclear transcription protein; this interaction triggers cell transformation. Interacts with host ACY3. Interacts with host C1QR1. Interacts with host RBM24; this interaction, which enhances the interaction of the mature core protein with 5'-UTR, may inhibit viral translation and favor replication. Interacts with host EIF2AK2/PKR; this interaction induces the autophosphorylation of EIF2AK2. Part of the viral assembly initiation complex composed of NS2, E1, E2, NS3, NS4A, NS5A and the mature core protein. As to quaternary structure, forms a heterodimer with envelope glycoprotein E2. Interacts with mature core protein. Interacts with protease NS2. The heterodimer E1/E2 interacts with host CLDN1; this interaction plays a role in viral entry into host cell. Interacts with host SPSB2 (via C-terminus). Part of the viral assembly initiation complex composed of NS2, E1, E2, NS3, NS4A, NS5A and the mature core protein. In terms of assembly, forms a heterodimer with envelope glycoprotein E1. Interacts with host CD81 and SCARB1 receptors; these interactions play a role in viral entry into host cell. Interacts with host EIF2AK2/PKR; this interaction inhibits EIF2AK2 and probably allows the virus to evade the innate immune response. Interacts with host CD209/DC-SIGN and CLEC4M/DC-SIGNR. Interact with host SPCS1; this interaction is essential for viral particle assembly. Interacts with protease NS2. The heterodimer E1/E2 interacts with host CLDN1; this interaction plays a role in viral entry into host cell. Part of the viral assembly initiation complex composed of NS2, E1, E2, NS3, NS4A, NS5A and the mature core protein. In terms of processing, specific enzymatic cleavages in vivo yield mature proteins. The structural proteins, core, E1, E2 and p7 are produced by proteolytic processing by host signal peptidases. The core protein precursor is synthesized as a 23 kDa, which is retained in the ER membrane through the hydrophobic signal peptide. Cleavage by the signal peptidase releases the 21 kDa mature core protein. The cleavage of the core protein precursor occurs between aminoacids 176 and 188 but the exact cleavage site is not known. Some degraded forms of the core protein appear as well during the course of infection. The other proteins (p7, NS2, NS3, NS4A, NS4B, NS5A and NS5B) are cleaved by the viral proteases. Autoprocessing between NS2 and NS3 is mediated by the NS2 cysteine protease catalytic domain and regulated by the NS3 N-terminal domain. Post-translationally, phosphorylated by host PKC and PKA. Ubiquitinated; mediated by UBE3A and leading to core protein subsequent proteasomal degradation. In terms of processing, highly N-glycosylated.

The protein resides in the host endoplasmic reticulum membrane. It localises to the host mitochondrion membrane. Its subcellular location is the virion. The protein localises to the host cytoplasm. It is found in the host nucleus. The protein resides in the host lipid droplet. It localises to the virion membrane. In terms of biological role, packages viral RNA to form a viral nucleocapsid, and promotes virion budding. Participates in the viral particle production as a result of its interaction with the non-structural protein 5A. Binds RNA and may function as a RNA chaperone to induce the RNA structural rearrangements taking place during virus replication. Modulates viral translation initiation by interacting with viral IRES and 40S ribosomal subunit. Affects various cell signaling pathways, host immunity and lipid metabolism. Prevents the establishment of cellular antiviral state by blocking the interferon-alpha/beta (IFN-alpha/beta) and IFN-gamma signaling pathways and by blocking the formation of phosphorylated STAT1 and promoting ubiquitin-mediated proteasome-dependent degradation of STAT1. Activates STAT3 leading to cellular transformation. Regulates the activity of cellular genes, including c-myc and c-fos. May repress the promoter of p53, and sequester CREB3 and SP110 isoform 3/Sp110b in the cytoplasm. Represses cell cycle negative regulating factor CDKN1A, thereby interrupting an important check point of normal cell cycle regulation. Targets transcription factors involved in the regulation of inflammatory responses and in the immune response: suppresses TNF-induced NF-kappa-B activation, and activates AP-1. Binds to dendritic cells (DCs) via C1QR1, resulting in down-regulation of T-lymphocytes proliferation. Alters lipid metabolism by interacting with hepatocellular proteins involved in lipid accumulation and storage. Induces up-regulation of FAS promoter activity, and thereby contributes to the increased triglyceride accumulation in hepatocytes (steatosis). Forms a heterodimer with envelope glycoprotein E2, which mediates virus attachment to the host cell, virion internalization through clathrin-dependent endocytosis and fusion with host membrane. Fusion with the host cell is most likely mediated by both E1 and E2, through conformational rearrangements of the heterodimer required for fusion rather than a classical class II fusion mechanism. E1/E2 heterodimer binds host apolipoproteins such as APOB and ApoE thereby forming a lipo-viro-particle (LVP). APOE associated to the LVP allows the initial virus attachment to cell surface receptors such as the heparan sulfate proteoglycans (HSPGs), syndecan-1 (SDC1), syndecan-1 (SDC2), the low-density lipoprotein receptor (LDLR) and scavenger receptor class B type I (SCARB1). The cholesterol transfer activity of SCARB1 allows E2 exposure and binding of E2 to SCARB1 and the tetraspanin CD81. E1/E2 heterodimer binding on CD81 activates the epithelial growth factor receptor (EGFR) signaling pathway. Diffusion of the complex E1-E2-EGFR-SCARB1-CD81 to the cell lateral membrane allows further interaction with Claudin 1 (CLDN1) and occludin (OCLN) to finally trigger HCV entry. Functionally, forms a heterodimer with envelope glycoprotein E1, which mediates virus attachment to the host cell, virion internalization through clathrin-dependent endocytosis and fusion with host membrane. Fusion with the host cell is most likely mediated by both E1 and E2, through conformational rearrangements of the heterodimer required for fusion rather than a classical class II fusion mechanism. The interaction between envelope glycoprotein E2 and host apolipoprotein E/APOE allows the proper assembly, maturation and infectivity of the viral particles. This interaction is probably promoted via the up-regulation of cellular autophagy by the virus. E1/E2 heterodimer binds host apolipoproteins such as APOB and APOE thereby forming a lipo-viro-particle (LVP). APOE associated to the LVP allows the initial virus attachment to cell surface receptors such as the heparan sulfate proteoglycans (HSPGs), syndecan-1 (SDC1), syndecan-1 (SDC2), the low-density lipoprotein receptor (LDLR) and scavenger receptor class B type I (SCARB1). The cholesterol transfer activity of SCARB1 allows E2 exposure and binding of E2 to SCARB1 and the tetraspanin CD81. E1/E2 heterodimer binding on CD81 activates the epithelial growth factor receptor (EGFR) signaling pathway. Diffusion of the complex E1-E2-EGFR-SCARB1-CD81 to the cell lateral membrane allows further interaction with Claudin 1 (CLDN1) and occludin (OCLN) to finally trigger HCV entry. Inhibits host EIF2AK2/PKR activation, preventing the establishment of an antiviral state. Viral ligand for CD209/DC-SIGN and CLEC4M/DC-SIGNR, which are respectively found on dendritic cells (DCs), and on liver sinusoidal endothelial cells and macrophage-like cells of lymph node sinuses. These interactions allow the capture of circulating HCV particles by these cells and subsequent facilitated transmission to permissive cells such as hepatocytes and lymphocyte subpopulations. This Hepatitis C virus (isolate HCT27) (HCV) protein is Genome polyprotein.